We begin with the raw amino-acid sequence, 657 residues long: Protein mono-ADP-ribosyltransferase TIPARP (657 aa).

Positions 1-10 (MEMETTEPEP) are enriched in acidic residues. The tract at residues 1–21 (MEMETTEPEPDCVVQPPSPPD) is disordered. The residue at position 39 (Cys39) is an ADP-ribosylcysteine. The short motif at 41–47 (KKKDQKR) is the Nuclear localization signal element. The C3H1-type zinc-finger motif lies at 237–264 (ENGIEICMDFLQGTCIYGRDCLKHHTVL). Positions 332 to 410 (STPPSSNVNS…RRPLFRSCFI (79 aa)) constitute a WWE domain. The region spanning 449-657 (YPETWVYMHP…YEEVSNTVSI (209 aa)) is the PARP catalytic domain.

Belongs to the ARTD/PARP family. Interacts with AHR. In terms of processing, auto-mono-ADP-ribosylated.

The protein resides in the nucleus. It carries out the reaction L-aspartyl-[protein] + NAD(+) = 4-O-(ADP-D-ribosyl)-L-aspartyl-[protein] + nicotinamide. The enzyme catalyses L-glutamyl-[protein] + NAD(+) = 5-O-(ADP-D-ribosyl)-L-glutamyl-[protein] + nicotinamide. It catalyses the reaction L-cysteinyl-[protein] + NAD(+) = S-(ADP-D-ribosyl)-L-cysteinyl-[protein] + nicotinamide + H(+). With respect to regulation, ADP-ribosyltransferase activity is inhibited by PJ34; inhibition is however not specific to TIPARP and other PARP-domain containing proteins are also inhibited by PJ34. Partially inhibited by KU0058948. Functionally, ADP-ribosyltransferase that mediates mono-ADP-ribosylation of glutamate, aspartate and cysteine residues on target proteins. Acts as a negative regulator of AHR by mediating mono-ADP-ribosylation of AHR, leading to inhibit transcription activator activity of AHR. The protein is Protein mono-ADP-ribosyltransferase TIPARP of Homo sapiens (Human).